Consider the following 464-residue polypeptide: tRNA modification GTPase MnmE (464 aa).

3 residues coordinate (6S)-5-formyl-5,6,7,8-tetrahydrofolate: arginine 25, glutamate 87, and lysine 130. Positions 226 to 386 (GLSVVLAGQP…LRAELLRIAG (161 aa)) constitute a TrmE-type G domain. Asparagine 236 contacts K(+). Residues 236-241 (NVGKSS), 255-261 (TPIAGTT), and 280-283 (DTAG) contribute to the GTP site. Position 240 (serine 240) interacts with Mg(2+). K(+) contacts are provided by threonine 255, isoleucine 257, and threonine 260. Threonine 261 serves as a coordination point for Mg(2+). Lysine 464 provides a ligand contact to (6S)-5-formyl-5,6,7,8-tetrahydrofolate.

This sequence belongs to the TRAFAC class TrmE-Era-EngA-EngB-Septin-like GTPase superfamily. TrmE GTPase family. Homodimer. Heterotetramer of two MnmE and two MnmG subunits. K(+) is required as a cofactor.

Its subcellular location is the cytoplasm. Functionally, exhibits a very high intrinsic GTPase hydrolysis rate. Involved in the addition of a carboxymethylaminomethyl (cmnm) group at the wobble position (U34) of certain tRNAs, forming tRNA-cmnm(5)s(2)U34. The protein is tRNA modification GTPase MnmE of Burkholderia ambifaria (strain ATCC BAA-244 / DSM 16087 / CCUG 44356 / LMG 19182 / AMMD) (Burkholderia cepacia (strain AMMD)).